A 394-amino-acid chain; its full sequence is Na(+)/H(+) antiporter NhaA (394 aa).

Helical transmembrane passes span 11-31, 59-79, 95-115, 125-145, 155-175, 177-197, 203-220, 254-274, 296-316, 328-348, and 365-385; these read LEAA…IFAN, LLMW…GMEV, IFPA…YWFI, GWAI…ALLS, FLLA…ALFF, HEMS…LVAM, TGLI…ASVL, ALAP…NAGV, LIIG…LLGI, IFAI…IAGL, and LGIL…LKIT.

The protein belongs to the NhaA Na(+)/H(+) (TC 2.A.33) antiporter family.

It is found in the cell inner membrane. It catalyses the reaction Na(+)(in) + 2 H(+)(out) = Na(+)(out) + 2 H(+)(in). Functionally, na(+)/H(+) antiporter that extrudes sodium in exchange for external protons. The polypeptide is Na(+)/H(+) antiporter NhaA (Actinobacillus pleuropneumoniae serotype 3 (strain JL03)).